The following is a 171-amino-acid chain: Shikimate kinase (171 aa).

14–19 provides a ligand contact to ATP; that stretch reads GAGKST. S18 is a binding site for Mg(2+). Residues D36, R60, and G82 each contribute to the substrate site. Position 120 (R120) interacts with ATP. R139 is a binding site for substrate. Q156 provides a ligand contact to ATP.

The protein belongs to the shikimate kinase family. As to quaternary structure, monomer. It depends on Mg(2+) as a cofactor.

The protein localises to the cytoplasm. The enzyme catalyses shikimate + ATP = 3-phosphoshikimate + ADP + H(+). Its pathway is metabolic intermediate biosynthesis; chorismate biosynthesis; chorismate from D-erythrose 4-phosphate and phosphoenolpyruvate: step 5/7. Catalyzes the specific phosphorylation of the 3-hydroxyl group of shikimic acid using ATP as a cosubstrate. This chain is Shikimate kinase, found in Shewanella sp. (strain ANA-3).